Reading from the N-terminus, the 121-residue chain is Two-component response regulator ORR13 (121 aa).

Residues 5-121 enclose the Response regulatory domain; that stretch reads HVLVVDDTHV…ADVPRILNYI (117 aa). A 4-aspartylphosphate modification is found at Asp-55.

This sequence belongs to the ARR family. Type-A subfamily. Post-translationally, two-component system major event consists of a His-to-Asp phosphorelay between a sensor histidine kinase (HK) and a response regulator (RR). In plants, the His-to-Asp phosphorelay involves an additional intermediate named Histidine-containing phosphotransfer protein (HPt). This multistep phosphorelay consists of a His-Asp-His-Asp sequential transfer of a phosphate group between first a His and an Asp of the HK protein, followed by the transfer to a conserved His of the HPt protein and finally the transfer to an Asp in the receiver domain of the RR protein. Expressed in flowers and panicles.

Functionally, functions as a response regulator involved in His-to-Asp phosphorelay signal transduction system. Phosphorylation of the Asp residue in the receiver domain activates the ability of the protein to promote the transcription of target genes. Type-A response regulators seem to act as negative regulators of the cytokinin signaling. This chain is Two-component response regulator ORR13, found in Oryza sativa subsp. japonica (Rice).